Reading from the N-terminus, the 695-residue chain is Elongation factor G (695 aa).

The 275-residue stretch at 12–286 (DKIRNIGIMA…AVIDYLPSPL (275 aa)) folds into the tr-type G domain. GTP is bound by residues 21 to 28 (AHIDAGKT), 85 to 89 (DTPGH), and 139 to 142 (NKMD).

Belongs to the TRAFAC class translation factor GTPase superfamily. Classic translation factor GTPase family. EF-G/EF-2 subfamily.

Its subcellular location is the cytoplasm. Catalyzes the GTP-dependent ribosomal translocation step during translation elongation. During this step, the ribosome changes from the pre-translocational (PRE) to the post-translocational (POST) state as the newly formed A-site-bound peptidyl-tRNA and P-site-bound deacylated tRNA move to the P and E sites, respectively. Catalyzes the coordinated movement of the two tRNA molecules, the mRNA and conformational changes in the ribosome. This Thermotoga neapolitana (strain ATCC 49049 / DSM 4359 / NBRC 107923 / NS-E) protein is Elongation factor G.